The sequence spans 123 residues: Ragulator complex protein LAMTOR3-B (123 aa).

Belongs to the LAMTOR3 family. As to quaternary structure, part of the Ragulator complex composed of lamtor1, lamtor2, lamtor3, lamtor4 and lamtor5. The Ragulator complex interacts with slc38a9; the probable amino acid sensor. Component of the lysosomal folliculin complex (LFC).

It localises to the late endosome membrane. Functionally, as part of the Ragulator complex it is involved in amino acid sensing and activation of mTORC1, a signaling complex promoting cell growth in response to growth factors, energy levels, and amino acids. Activated by amino acids through a mechanism involving the lysosomal V-ATPase, the Ragulator plays a dual role for the small GTPases Rag (RagA/RRAGA, RagB/RRAGB, RagC/RRAGC and/or RagD/RRAGD): it (1) acts as a guanine nucleotide exchange factor (GEF), activating the small GTPases Rag and (2) mediates recruitment of Rag GTPases to the lysosome membrane. Activated Ragulator and Rag GTPases function as a scaffold recruiting mTORC1 to lysosomes where it is in turn activated. This is Ragulator complex protein LAMTOR3-B (lamtor3-b) from Xenopus laevis (African clawed frog).